Consider the following 425-residue polypeptide: Serine hydroxymethyltransferase (425 aa).

(6S)-5,6,7,8-tetrahydrofolate-binding positions include Leu125 and 129–131 (GHL). Lys234 carries the N6-(pyridoxal phosphate)lysine modification.

It belongs to the SHMT family. In terms of assembly, homodimer. Pyridoxal 5'-phosphate is required as a cofactor.

It localises to the cytoplasm. It catalyses the reaction (6R)-5,10-methylene-5,6,7,8-tetrahydrofolate + glycine + H2O = (6S)-5,6,7,8-tetrahydrofolate + L-serine. It participates in one-carbon metabolism; tetrahydrofolate interconversion. It functions in the pathway amino-acid biosynthesis; glycine biosynthesis; glycine from L-serine: step 1/1. Functionally, catalyzes the reversible interconversion of serine and glycine with tetrahydrofolate (THF) serving as the one-carbon carrier. This reaction serves as the major source of one-carbon groups required for the biosynthesis of purines, thymidylate, methionine, and other important biomolecules. Also exhibits THF-independent aldolase activity toward beta-hydroxyamino acids, producing glycine and aldehydes, via a retro-aldol mechanism. This chain is Serine hydroxymethyltransferase, found in Marinomonas sp. (strain MWYL1).